Consider the following 276-residue polypeptide: NAD-capped RNA hydrolase NudC (276 aa).

Arginine 82 serves as a coordination point for substrate. Zn(2+) contacts are provided by cysteine 112 and cysteine 115. A substrate-binding site is contributed by glutamate 125. Zn(2+)-binding residues include cysteine 130 and cysteine 133. Tyrosine 138 contributes to the substrate binding site. One can recognise a Nudix hydrolase domain in the interval 139–262 (PRISPSMIVL…SIARYLIDLY (124 aa)). Alanine 172, glutamate 188, and glutamate 192 together coordinate a divalent metal cation. Positions 173 to 194 (GFAEPGESAEDCLVREVREEVA) match the Nudix box motif. 206-213 (QCWPFPHS) is a binding site for substrate. Glutamate 233 contacts a divalent metal cation. Alanine 255 lines the substrate pocket.

The protein belongs to the Nudix hydrolase family. NudC subfamily. As to quaternary structure, homodimer. Mg(2+) is required as a cofactor. Mn(2+) serves as cofactor. The cofactor is Zn(2+).

The enzyme catalyses a 5'-end NAD(+)-phospho-ribonucleoside in mRNA + H2O = a 5'-end phospho-adenosine-phospho-ribonucleoside in mRNA + beta-nicotinamide D-ribonucleotide + 2 H(+). The catalysed reaction is NAD(+) + H2O = beta-nicotinamide D-ribonucleotide + AMP + 2 H(+). It catalyses the reaction NADH + H2O = reduced beta-nicotinamide D-ribonucleotide + AMP + 2 H(+). MRNA decapping enzyme that specifically removes the nicotinamide adenine dinucleotide (NAD) cap from a subset of mRNAs by hydrolyzing the diphosphate linkage to produce nicotinamide mononucleotide (NMN) and 5' monophosphate mRNA. The NAD-cap is present at the 5'-end of some mRNAs and stabilizes RNA against 5'-processing. Has preference for mRNAs with a 5'-end purine. Catalyzes the hydrolysis of a broad range of dinucleotide pyrophosphates. This chain is NAD-capped RNA hydrolase NudC, found in Pseudomonas putida (strain ATCC 700007 / DSM 6899 / JCM 31910 / BCRC 17059 / LMG 24140 / F1).